Here is a 242-residue protein sequence, read N- to C-terminus: Uridylate kinase (242 aa).

An ATP-binding site is contributed by 12 to 15; the sequence is KLSG. The involved in allosteric activation by GTP stretch occupies residues 20–25; the sequence is GDEGFG. A UMP-binding site is contributed by Gly54. Positions 55 and 59 each coordinate ATP. UMP contacts are provided by residues Asp74 and 135-142; that span reads TGSPFFTT. Positions 162, 168, and 171 each coordinate ATP.

The protein belongs to the UMP kinase family. In terms of assembly, homohexamer.

Its subcellular location is the cytoplasm. The enzyme catalyses UMP + ATP = UDP + ADP. It functions in the pathway pyrimidine metabolism; CTP biosynthesis via de novo pathway; UDP from UMP (UMPK route): step 1/1. Its activity is regulated as follows. Allosterically activated by GTP. Inhibited by UTP. Catalyzes the reversible phosphorylation of UMP to UDP. The polypeptide is Uridylate kinase (Pasteurella multocida (strain Pm70)).